The sequence spans 61 residues: MDPNCSCPTGGSCTCAGSCTCKACRCTSCKKSCCSCCPAGCAKCAQGCICKGASDKCSCCA.

Met1 carries the N-acetylmethionine modification. The interval Met1–Cys29 is beta. A divalent metal cation contacts are provided by Cys5, Cys7, Cys13, Cys15, Cys19, Cys21, Cys24, Cys26, Cys29, Cys33, Cys34, Cys36, Cys37, Cys41, Cys44, Cys48, Cys50, and Cys57. Residues Lys30–Ala61 form an alpha region. Ser58 carries the phosphoserine modification. 2 residues coordinate a divalent metal cation: Cys59 and Cys60.

Belongs to the metallothionein superfamily. Type 1 family. In terms of assembly, monomer.

Metallothioneins have a high content of cysteine residues that bind various heavy metals; these proteins are transcriptionally regulated by both heavy metals and glucocorticoids. This chain is Metallothionein-1F (MT1F), found in Sus scrofa (Pig).